Reading from the N-terminus, the 164-residue chain is Crossover junction endodeoxyribonuclease RuvC (164 aa).

Catalysis depends on residues aspartate 7, glutamate 67, and aspartate 140. Mg(2+) is bound by residues aspartate 7, glutamate 67, and aspartate 140.

This sequence belongs to the RuvC family. In terms of assembly, homodimer which binds Holliday junction (HJ) DNA. The HJ becomes 2-fold symmetrical on binding to RuvC with unstacked arms; it has a different conformation from HJ DNA in complex with RuvA. In the full resolvosome a probable DNA-RuvA(4)-RuvB(12)-RuvC(2) complex forms which resolves the HJ. Requires Mg(2+) as cofactor.

It is found in the cytoplasm. It carries out the reaction Endonucleolytic cleavage at a junction such as a reciprocal single-stranded crossover between two homologous DNA duplexes (Holliday junction).. In terms of biological role, the RuvA-RuvB-RuvC complex processes Holliday junction (HJ) DNA during genetic recombination and DNA repair. Endonuclease that resolves HJ intermediates. Cleaves cruciform DNA by making single-stranded nicks across the HJ at symmetrical positions within the homologous arms, yielding a 5'-phosphate and a 3'-hydroxyl group; requires a central core of homology in the junction. The consensus cleavage sequence is 5'-(A/T)TT(C/G)-3'. Cleavage occurs on the 3'-side of the TT dinucleotide at the point of strand exchange. HJ branch migration catalyzed by RuvA-RuvB allows RuvC to scan DNA until it finds its consensus sequence, where it cleaves and resolves the cruciform DNA. The sequence is that of Crossover junction endodeoxyribonuclease RuvC from Chloroflexus aggregans (strain MD-66 / DSM 9485).